Reading from the N-terminus, the 313-residue chain is Protein YABBY 3 (313 aa).

The segment at 65–92 (CHYCDTVLVVSVPSSSLFETVTVRCGHC) adopts a C4-type zinc-finger fold. Disordered regions lie at residues 107-149 (TTAA…SLLD) and 180-221 (NNSP…KRQR). Positions 112-128 (APPPPPPPPPPPPPPAA) are enriched in pro residues.

The protein belongs to the YABBY family. As to expression, expressed in shoot apex and young inflorescences.

Its subcellular location is the nucleus. This chain is Protein YABBY 3 (YAB3), found in Oryza sativa subsp. japonica (Rice).